The chain runs to 771 residues: Transducin-like enhancer protein 3-B (771 aa).

Positions 1–141 (MYPQGRHPAP…PLTQQQLQAQ (141 aa)) are q domain. Positions 137-148 (QLQAQHLSHAAH) are enriched in low complexity. 2 disordered regions span residues 137-174 (QLQA…GSGS) and 196-360 (HHDL…MEAL). The segment at 142–209 (HLSHAAHGPP…EHRERESSTN (68 aa)) is GP domain. Residues 196 to 206 (HHDLEHRERES) show a composition bias toward basic and acidic residues. Over residues 207-217 (STNNSVSPSDS) the composition is skewed to low complexity. Residues 210 to 278 (NSVSPSDSLR…TPRVSPSHSP (69 aa)) form a ccN domain region. Composition is skewed to basic and acidic residues over residues 219–257 (RASE…KSDD) and 282–293 (GLDKARALKKDA). Residues 235 to 238 (KKRR) carry the Nuclear localization signal motif. An SP domain region spans residues 279-451 (PENGLDKARA…GGKPAYSFHV (173 aa)). The segment covering 294–309 (PNSPASVASSGSTPSS) has biased composition (low complexity). 2 positions are modified to phosphoserine: Ser-296 and Ser-299. Over residues 310 to 319 (KAKDHPHNDK) the composition is skewed to basic and acidic residues. Positions 320-332 (SSTPGLKSNTPTP) are enriched in polar residues. WD repeat units lie at residues 483–521 (SHGE…SKSP), 529–568 (NRDN…PRIK), 573–612 (SSAP…LVRQ), 615–654 (GHTD…QLQQ), 656–695 (DFTS…KYQL), 697–736 (LHES…SIFQ), and 738–771 (KESS…EVIY).

It belongs to the WD repeat Groucho/TLE family. In terms of tissue distribution, at gastrulation, expression is absent within the axial mesoderm. After gastrulation is complete, expressed in the presomitic mesoderm, but expression in the tailbud doesn't begin until the six to seven somite stage, after which it becomes abundant. Expression is abundant throughout somitogenesis within the posterior half of the somites, but is absent from older somites. Also expressed in a dynamic manner within the neural plate.

It is found in the nucleus. Transcriptional corepressor that binds to a number of transcription factors. Inhibits the transcriptional activation mediated by CTNNB1 and TCF family members in Wnt signaling. The effects of full-length TLE family members may be modulated by association with dominant-negative AES. In Danio rerio (Zebrafish), this protein is Transducin-like enhancer protein 3-B.